The primary structure comprises 306 residues: Serine/threonine-protein kinase KIN28 (306 aa).

In terms of domain architecture, Protein kinase spans 7–290 (YTKEKKVGEG…AVQCLESDYF (284 aa)). Residues 13-21 (VGEGTYAVV) and K36 contribute to the ATP site. D129 acts as the Proton acceptor in catalysis. At T162 the chain carries Phosphothreonine; by CAK.

It belongs to the protein kinase superfamily. CMGC Ser/Thr protein kinase family. CDC2/CDKX subfamily. In terms of assembly, CCL1 and KIN28 form the TFIIK complex, a component of the TFIIH holo complex. Component of a complex consisting of KIN28, CCL1 and TFB3. Interacts with TFB3. Also interacts with HNT1 and HOG1. In terms of processing, phosphorylation of Thr-162 regulates the affinity of interaction between CCL1, KIN28 and TFB3. Thr-162 phosphorylation does not vary through the cell cycle and is necessary for full kinase activity.

It localises to the nucleus. The enzyme catalyses [DNA-directed RNA polymerase] + ATP = phospho-[DNA-directed RNA polymerase] + ADP + H(+). Functionally, catalytic component of the TFIIK complex (KIN28-CCL1 dimer) which is the protein kinase component of transcription factor IIH (TFIIH) and phosphorylates the C-terminal domain of RNA polymerase II during transition from transcription to elongation after preinitiation complex (PIC) formation, thereby positively regulating transcription. TFIIH (or factor B) is essential for both basal and activated transcription, and is involved in nucleotide excision repair (NER) of damaged DNA. TFIIH has DNA-dependent ATPase activity and is essential for polymerase II transcription in vitro. Essential for cell proliferation. The sequence is that of Serine/threonine-protein kinase KIN28 (KIN28) from Saccharomyces cerevisiae (strain ATCC 204508 / S288c) (Baker's yeast).